The sequence spans 98 residues: Acylphosphatase (98 aa).

In terms of domain architecture, Acylphosphatase-like spans 12–98; sequence TYYVRVRGVV…DKRFERFQQH (87 aa). Catalysis depends on residues Arg27 and Asn45.

This sequence belongs to the acylphosphatase family.

The enzyme catalyses an acyl phosphate + H2O = a carboxylate + phosphate + H(+). The polypeptide is Acylphosphatase (acyP) (Burkholderia mallei (strain NCTC 10247)).